Reading from the N-terminus, the 443-residue chain is Xaa-Pro dipeptidase (443 aa).

Positions 244, 255, 339, 384, and 423 each coordinate Mn(2+).

Belongs to the peptidase M24B family. Bacterial-type prolidase subfamily. It depends on Mn(2+) as a cofactor.

The catalysed reaction is Xaa-L-Pro dipeptide + H2O = an L-alpha-amino acid + L-proline. In terms of biological role, splits dipeptides with a prolyl residue in the C-terminal position. In Pseudoalteromonas atlantica (strain T6c / ATCC BAA-1087), this protein is Xaa-Pro dipeptidase.